A 630-amino-acid polypeptide reads, in one-letter code: Protein zwilch homolog (630 aa).

Belongs to the ZWILCH family. As to quaternary structure, component of the RZZ complex composed of rod-1, czw-1 and zwl-1. Interacts with the spindly-like protein spdl-1. Interacts with NDC80 complex component ndc-80.

It is found in the cytoplasm. The protein localises to the cell cortex. Its subcellular location is the chromosome. It localises to the centromere. The protein resides in the kinetochore. It is found in the cytoskeleton. The protein localises to the spindle. In terms of biological role, essential component of the mitotic checkpoint, which prevents cells from prematurely exiting mitosis. Required for chromosome segregation, the assembly of the dynein-dynactin and mdf-1-mdf-2 complexes onto kinetochores and spindle pole separation. Its function related to the spindle assembly machinery and kinetochore-microtubule attachments likely depends on its association in the mitotic RZZ complex. The RZZ complex recruits the spindly-like protein spdl-1 to kinetochores. To prevent irregular chromosome segregation, the complex also inhibits the attachment of the kinetochore-associated NDC80 complex to microtubules. The recruitment of spdl-1 to kinetochores relieves this inhibition. Required for embryonic development. This chain is Protein zwilch homolog (zwl-1), found in Caenorhabditis elegans.